Reading from the N-terminus, the 243-residue chain is uncharacterized protein (243 aa).

The short motif at 207-224 is the Bipartite nuclear localization signal element; sequence KKTSISGYKTLDVKRKFV.

This is an uncharacterized protein from Acheta domesticus (House cricket).